Here is a 515-residue protein sequence, read N- to C-terminus: Envelope glycoprotein (515 aa).

The first 33 residues, Met1 to Thr33, serve as a signal peptide directing secretion. At Trp34–Thr435 the chain is on the extracellular side. Residues Asn129 and Asn203 are each glycosylated (N-linked (GlcNAc...) asparagine; by host). A CXXC motif is present at residues Cys212–Cys215. Cystine bridges form between Cys212–Cys215, Cys212–Cys392, and Cys384–Cys391. Residues Asn230, Asn251, Asn256, Asn271, and Asn287 are each glycosylated (N-linked (GlcNAc...) asparagine; by host). Positions Val304–Val324 are fusion peptide. 2 coiled-coil regions span residues Gln330 to Ile376 and Asn388 to Trp420. An N-linked (GlcNAc...) asparagine; by host glycan is attached at Asn351. Residues Ala365 to Gln381 form an immunosuppression region. Residues Cys384–Cys392 carry the CX6CC motif. Asn398 carries an N-linked (GlcNAc...) asparagine; by host glycan. Residues Ile436 to Leu456 traverse the membrane as a helical segment. Cys455 carries S-palmitoyl cysteine; by host lipidation. Over Ile457 to Pro515 the chain is Cytoplasmic.

As to quaternary structure, the mature envelope protein (Env) consists of a trimer of SU-TM heterodimers attached by a labile interchain disulfide bond. Specific enzymatic cleavages in vivo yield mature proteins. Envelope glycoproteins are synthesized as an inactive precursor that is N-glycosylated and processed likely by host cell furin or by a furin-like protease in the Golgi to yield the mature SU and TM proteins. The cleavage site between SU and TM requires the minimal sequence [KR]-X-[KR]-R. Post-translationally, the CXXC motif is highly conserved across a broad range of retroviral envelope proteins. It is thought to participate in the formation of a labile disulfide bond possibly with the CX6CC motif present in the transmembrane protein. Isomerization of the intersubunit disulfide bond to an SU intrachain disulfide bond is thought to occur upon receptor recognition in order to allow membrane fusion. In terms of processing, the transmembrane protein is palmitoylated.

It is found in the virion membrane. It localises to the host cell membrane. In terms of biological role, the surface protein (SU) attaches the virus to the host cell by binding to its receptor. This interaction triggers the refolding of the transmembrane protein (TM) and is thought to activate its fusogenic potential by unmasking its fusion peptide. Fusion occurs at the host cell plasma membrane. Its function is as follows. The transmembrane protein (TM) acts as a class I viral fusion protein. Under the current model, the protein has at least 3 conformational states: pre-fusion native state, pre-hairpin intermediate state, and post-fusion hairpin state. During viral and target cell membrane fusion, the coiled coil regions (heptad repeats) assume a trimer-of-hairpins structure, positioning the fusion peptide in close proximity to the C-terminal region of the ectodomain. The formation of this structure appears to drive apposition and subsequent fusion of viral and target cell membranes. Membranes fusion leads to delivery of the nucleocapsid into the cytoplasm. This chain is Envelope glycoprotein (env), found in Bovine leukemia virus (isolate Australian) (BLV).